Consider the following 89-residue polypeptide: Acylphosphatase (89 aa).

Positions 3–89 (HIHLQVFGRV…NQKLSDFRSI (87 aa)) constitute an Acylphosphatase-like domain. Active-site residues include R18 and N36.

The protein belongs to the acylphosphatase family.

It catalyses the reaction an acyl phosphate + H2O = a carboxylate + phosphate + H(+). This Staphylococcus aureus (strain Mu3 / ATCC 700698) protein is Acylphosphatase (acyP).